The chain runs to 506 residues: Protein nucleotidyltransferase YdiU (506 aa).

Positions 95, 97, 98, 118, 130, 131, 181, and 188 each coordinate ATP. Residue Asp-257 is the Proton acceptor of the active site. Mg(2+)-binding residues include Asn-258 and Asp-267. Asp-267 is an ATP binding site. Residues 487–506 (KHYQDAPTPDQRVKQTFCGT) form a disordered region.

Belongs to the SELO family. The cofactor is Mg(2+). Mn(2+) serves as cofactor.

The enzyme catalyses L-seryl-[protein] + ATP = 3-O-(5'-adenylyl)-L-seryl-[protein] + diphosphate. It catalyses the reaction L-threonyl-[protein] + ATP = 3-O-(5'-adenylyl)-L-threonyl-[protein] + diphosphate. It carries out the reaction L-tyrosyl-[protein] + ATP = O-(5'-adenylyl)-L-tyrosyl-[protein] + diphosphate. The catalysed reaction is L-histidyl-[protein] + UTP = N(tele)-(5'-uridylyl)-L-histidyl-[protein] + diphosphate. The enzyme catalyses L-seryl-[protein] + UTP = O-(5'-uridylyl)-L-seryl-[protein] + diphosphate. It catalyses the reaction L-tyrosyl-[protein] + UTP = O-(5'-uridylyl)-L-tyrosyl-[protein] + diphosphate. Functionally, nucleotidyltransferase involved in the post-translational modification of proteins. It can catalyze the addition of adenosine monophosphate (AMP) or uridine monophosphate (UMP) to a protein, resulting in modifications known as AMPylation and UMPylation. This is Protein nucleotidyltransferase YdiU from Shewanella denitrificans (strain OS217 / ATCC BAA-1090 / DSM 15013).